A 677-amino-acid chain; its full sequence is MSSSTTPDLLYPSADKVAEPSDNIHGDELRLRERIKDNPTNILSYFQLIQYLETQESYAKVREVYEQFHNTFPFYSPAWTLQLKGELARDEFETVEKILAQCLSGKLENNDLSLWSTYLDYIRRKNNLITGGQEARAVIVKAFQLVMQKCAIFEPKSSSFWNEYLNFLEQWKPFNKWEEQQRIDMLREFYKKMLCVPFDNLEKMWNRYTQWEQEINSLTARKFIGELSAEYMKARSLYQEWLNVTNGLKRASPINLRTANKKNIPQPGTSDSNIQQLQIWLNWIKWERENKLMLSEDMLSQRISYVYKQGIQYMIFSAEMWYDYSMYISENSDRQNILYTALLANPDSPSLTFKLSECYELDNDSESVSNCFDKCTQTLLSQYKKIASDVNSGEDNNTEYEQELLYKQREKLTFVFCVYMNTMKRISGLSAARTVFGKCRKLKRILTHDVYVENAYLEFQNQNDYKTAFKVLELGLKYFQNDGVYINKYLDFLIFLNKDSQIKTLFETSVEKVQDLTQLKEIYKKMISYESKFGNLNNVYSLEKRFFERFPQENLIEVFTSRYQIQNSNLIKKLELTYMYNEEEDSYFSSGNGDGHHGSYNMSSSDRKRLMEETGNNGNFSNKKFKRDSELPTEVLDLLSVIPKRQYFNTNLLDAQKLVNFLNDQVEIPTVESTKSG.

HAT repeat units follow at residues 56 to 88 (ESYA…GELA), 90 to 124 (DEFE…YIRR), 138 to 170 (VIVK…FLEQ), 181 to 214 (QRID…WEQE), 257 to 289 (RTAN…WERE), and 298 to 330 (MLSQ…YISE).

In terms of assembly, component of the CFIA complex, which is composed of RNA14, RNA15, PCF11 and CLP1. Interacts with FIP1, PFS2, YSH1 and probably also with RNA15. Probably interacts with the phosphorylated CTD domain of RPB1/RNA polymerase II.

It is found in the nucleus. The protein resides in the cytoplasm. Its function is as follows. Component of the cleavage factor IA (CFIA) complex, which is involved in the endonucleolytic cleavage during polyadenylation-dependent pre-mRNA 3'-end formation and cooperates with the cleavage factor NAB4/CFIB and the cleavage and polyadenylation factor (CPF) complex. The polypeptide is mRNA 3'-end-processing protein RNA14 (RNA14) (Saccharomyces cerevisiae (strain ATCC 204508 / S288c) (Baker's yeast)).